The primary structure comprises 232 residues: Modulator of macroautophagy TMEM150B (232 aa).

The Cytoplasmic portion of the chain corresponds to 1-6 (MWAWAL). Residues 7–27 (LPVFLAVFGTVGLWAVYAIAV) form a helical membrane-spanning segment. Topologically, residues 28-50 (SNNSVNITIEFPYISTCGAYTPQ) are extracellular. N-linked (GlcNAc...) asparagine glycans are attached at residues Asn-29 and Asn-33. Residues 51 to 71 (SCLFAQICNICCVLALWIVVI) traverse the membrane as a helical segment. Residues 72 to 83 (RFQQIRDLGRSS) lie on the Cytoplasmic side of the membrane. The helical transmembrane segment at 84 to 104 (HLNTAGLVLGFISSIGISILG) threads the bilayer. Residues 105–115 (NFQQTIIQEVH) are Extracellular-facing. The helical transmembrane segment at 116 to 136 (LLGALMAFFLGLAYFWIQAFI) threads the bilayer. Topologically, residues 137–153 (TYFSPPSRDNKWLVPVR) are cytoplasmic. A helical transmembrane segment spans residues 154-174 (FVLCSQCTCMVICMFVLHSTG). Over 175 to 177 (FRS) the chain is Extracellular. Residues 178 to 198 (AAAICEWILVMCFFALFGVFA) form a helical membrane-spanning segment. Residues 199–232 (AEFRHIDFHKLTVQKEGLKVANNDNVVWTVQDVQ) are Cytoplasmic-facing.

It belongs to the DRAM/TMEM150 family.

It is found in the cell membrane. The protein resides in the endosome membrane. It localises to the cytoplasmic vesicle. Its subcellular location is the autophagosome membrane. Functionally, modulator of macroautophagy that causes accumulation of autophagosomes under basal conditions and enhances autophagic flux. Represses cell death and promotes long-term clonogenic survival of cells grown in the absence of glucose in a macroautophagy-independent manner. May have some role in extracellular matrix engulfment or growth factor receptor recycling, both of which can modulate cell survival. The chain is Modulator of macroautophagy TMEM150B from Danio rerio (Zebrafish).